A 201-amino-acid chain; its full sequence is Recombination protein RecR (201 aa).

A C4-type zinc finger spans residues cysteine 59–cysteine 74. The Toprim domain maps to serine 82–proline 177.

It belongs to the RecR family.

Its function is as follows. May play a role in DNA repair. It seems to be involved in an RecBC-independent recombinational process of DNA repair. It may act with RecF and RecO. The chain is Recombination protein RecR from Rickettsia peacockii (strain Rustic).